A 459-amino-acid polypeptide reads, in one-letter code: MNRLPSSASALACSAHALNLIEKRTLDHEEMKALNQEVREYFKEHVNPGFLEYRKSVTAGGDYGAVEWQAGGLNTLVDTQGQEFIDCLGGFGIFNVGHRNPVVVSAVENQLAKQPLHSQELLDPLRAMLAKTLAALTPGKLKYSFFCNSGTESVEAAIKLAKAYQSPRGKFTFIATSGAFHGKSLGALSATAKSTFRKPFMPLLPGFRHVPFGDINAMRTMLSECKKTGDDVAAVILEPIQGEGGVILPPTGYLPAVRKLCDEFGALLILDEVQTGMGRTGKMFACEHENVQPDILCLAKALGGGVMPIGATVATEEVFSVLFDNPFLHTTTFGGNPLACAAALATINVLLTQNLPAQAAQKGDMLLDGFRLLAQEYPDLVNEVRGKGMLMAIEFVDNEIGYDFASEMFRQRVLVAGTLNNAKTIRIEPPLTLTLEQCEQVLKAARKALAALRVSVEEA.

Residues 150–151 and Gln-274 contribute to the pyridoxal 5'-phosphate site; that span reads GT. Residue Lys-300 is modified to N6-(pyridoxal phosphate)lysine. Thr-332 lines the pyridoxal 5'-phosphate pocket.

Belongs to the class-III pyridoxal-phosphate-dependent aminotransferase family. Putrescine aminotransferase subfamily. Pyridoxal 5'-phosphate serves as cofactor.

It carries out the reaction an alkane-alpha,omega-diamine + 2-oxoglutarate = an omega-aminoaldehyde + L-glutamate. It catalyses the reaction putrescine + 2-oxoglutarate = 1-pyrroline + L-glutamate + H2O. The catalysed reaction is cadaverine + 2-oxoglutarate = 5-aminopentanal + L-glutamate. It participates in amine and polyamine degradation; putrescine degradation; 4-aminobutanal from putrescine (transaminase route): step 1/1. In terms of biological role, catalyzes the aminotransferase reaction from putrescine to 2-oxoglutarate, leading to glutamate and 4-aminobutanal, which spontaneously cyclizes to form 1-pyrroline. This is the first step in one of two pathways for putrescine degradation, where putrescine is converted into 4-aminobutanoate (gamma-aminobutyrate or GABA) via 4-aminobutanal. Also functions as a cadaverine transaminase in a a L-lysine degradation pathway to succinate that proceeds via cadaverine, glutarate and L-2-hydroxyglutarate. The chain is Putrescine aminotransferase from Klebsiella pneumoniae subsp. pneumoniae (strain ATCC 700721 / MGH 78578).